The primary structure comprises 250 residues: Peptidyl-tRNA hydrolase, mitochondrial (250 aa).

The N-terminal 45 residues, 1–45 (MRLLSGASASRIPCPLLSLARARARCLPVPASATACRAASSSAAA), are a transit peptide targeting the mitochondrion. A tRNA-binding site is contributed by tyrosine 68. Histidine 73 (proton acceptor) is an active-site residue. Positions 118, 120, and 166 each coordinate tRNA.

It belongs to the PTH family.

Its subcellular location is the mitochondrion. It catalyses the reaction an N-acyl-L-alpha-aminoacyl-tRNA + H2O = an N-acyl-L-amino acid + a tRNA + H(+). The natural substrate for this enzyme may be peptidyl-tRNAs which drop off the ribosome during protein synthesis. The polypeptide is Peptidyl-tRNA hydrolase, mitochondrial (Oryza sativa subsp. japonica (Rice)).